A 551-amino-acid chain; its full sequence is Vacuolar protein sorting-associated protein 17 (551 aa).

The disordered stretch occupies residues 1–100 (MTSAVPYDPY…SERVILPERS (100 aa)). 2 stretches are compositionally biased toward polar residues: residues 29–39 (AATTTDGSSSM) and 46–64 (TEQTAASVQDNGTANNIQN). Residues 108–227 (LLAKVTGLER…FFIESDFNTY (120 aa)) enclose the PX domain. The stretch at 359-385 (IMRNLVQAQQNSKAKQEQARRFRSRRD) forms a coiled coil. Residues 474-504 (RLGRHAVSNNNSDTSQTLKGDSWTGESNRKS) are disordered. The segment covering 480–504 (VSNNNSDTSQTLKGDSWTGESNRKS) has biased composition (polar residues). Serine 544 bears the Phosphoserine mark.

Belongs to the VPS17 family. Component of the retromer complex which consists of VPS29, VPS26, VPS35, VPS5 and VPS17. Component of a retromer subcomplex consisting of VPS5 and VPS17. Phosphorylated on one or more serine residues.

It is found in the endomembrane system. Component of the membrane-associated retromer complex which is essential in endosome-to-Golgi retrograde transport. The VPS5-VPS17 subcomplex may assemble onto the membrane to promote vesicle formation and is required for recycling the vacuolar protein-sorting receptor. Required for the sorting and delivery of a subset of soluble vacuolar hydrolases. Required for retention of late Golgi membrane proteins and vacuolar biogenesis. Involved in vacuolar fragmentation during hyperosmotic stress. This Saccharomyces cerevisiae (strain ATCC 204508 / S288c) (Baker's yeast) protein is Vacuolar protein sorting-associated protein 17.